We begin with the raw amino-acid sequence, 653 residues long: MAENKWLRNGFVWIVLIIAVVALWVTFMKDGGSAREENFADVAADIRQGRVARIVMTEGSNDIQVQYIGEEEPRSSRLPPDVNIYQALEQYGLSGADVEIRVNPASQWGNWLSALTFILPTLFLIGIVIFMMRQAQGTNNQAISFGKSRARMFTGNKPTVTFADVAGVEEAKEELVEVVEFLKYPDKFASLGARIPRGVLLVGPPGTGKTLLSRAVAGEAGVPFFSISGSEFVEMFVGVGASRVRDLFDQAKRNAPCIVFIDEIDAVGRQRGAGLGGSHDEREQTLNQILVEMDGFDSTTNVIVIAATNRPDVLDPALLRPGRFDRQVVLDRPDIAGRRAILEVHSRGKPLESDVDLEELARQTPGFSGADLENLVNEAAILAARRNKKTIGRRELTEAIDRVIAGPERKSRVLSEREKLMTAYHEAGHALVARMLPHADPVHKVSIVARGMMGGYTRVLPEEDRFFWTKKQFEDQLAVFMGGHVAEELVFQEISTGAANDIERATNLARRMVTEYGMSKTLGPLAFGRKEELVFLGREINEQRNYSDEVAYMIDQEIRSLIDTAYKRAHEILSQHMDKLEAIAMLLMEAETIDGHELEALFDEPRPRPQLVGPPVTRPAALAHKTEEADRGGERSPHPQPHPSPTMRPQPAS.

Residues 1–8 lie on the Cytoplasmic side of the membrane; sequence MAENKWLR. Residues 9-29 form a helical membrane-spanning segment; that stretch reads NGFVWIVLIIAVVALWVTFMK. The Extracellular portion of the chain corresponds to 30–110; it reads DGGSAREENF…RVNPASQWGN (81 aa). A helical membrane pass occupies residues 111–131; sequence WLSALTFILPTLFLIGIVIFM. Residues 132 to 653 are Cytoplasmic-facing; the sequence is MRQAQGTNNQ…SPTMRPQPAS (522 aa). An ATP-binding site is contributed by 203–210; sequence GPPGTGKT. Histidine 425 contacts Zn(2+). The active site involves glutamate 426. Zn(2+) is bound by residues histidine 429 and aspartate 501. Residues 604 to 653 are disordered; the sequence is EPRPRPQLVGPPVTRPAALAHKTEEADRGGERSPHPQPHPSPTMRPQPAS. Residues 624 to 637 show a composition bias toward basic and acidic residues; it reads HKTEEADRGGERSP. Positions 638–653 are enriched in pro residues; sequence HPQPHPSPTMRPQPAS.

The protein in the central section; belongs to the AAA ATPase family. In the C-terminal section; belongs to the peptidase M41 family. As to quaternary structure, homohexamer. The cofactor is Zn(2+).

It localises to the cell membrane. Acts as a processive, ATP-dependent zinc metallopeptidase for both cytoplasmic and membrane proteins. Plays a role in the quality control of integral membrane proteins. The chain is ATP-dependent zinc metalloprotease FtsH 1 from Sphaerobacter thermophilus (strain ATCC 49802 / DSM 20745 / KCCM 41009 / NCIMB 13125 / S 6022).